The following is a 1555-amino-acid chain: Phospholipid-transporting ATPase DNF1 (1555 aa).

Positions Met-1–Arg-85 are disordered. Topologically, residues Met-1–Asn-134 are cytoplasmic. Residues Trp-22–Leu-37 are compositionally biased toward basic residues. The segment covering Gly-72 to Ser-82 has biased composition (low complexity). Residues Ile-135–Val-155 traverse the membrane as a helical segment. Position 156 (Asn-156) is a topological domain, extracellular. A helical transmembrane segment spans residues Pro-157–Ile-177. The Cytoplasmic portion of the chain corresponds to Glu-178–Asn-491. The tract at residues Thr-257–His-288 is disordered. A helical transmembrane segment spans residues Val-492–Ile-512. The Extracellular portion of the chain corresponds to Ala-513 to Gly-537. The chain crosses the membrane as a helical span at residues Phe-538 to Ile-558. At Ser-559–Met-1123 the chain is on the cytoplasmic side. The active-site 4-aspartylphosphate intermediate is the Asp-606. Asp-606, Lys-607, Thr-608, Glu-740, Phe-781, Ser-783, Lys-786, Lys-804, Arg-839, Thr-840, Thr-919, Gly-920, Asp-921, Arg-1031, and Lys-1037 together coordinate ATP. Asp-606 is a binding site for Mg(2+). Thr-608 serves as a coordination point for Mg(2+). Asp-1057 contributes to the Mg(2+) binding site. ATP-binding residues include Asn-1060 and Asp-1061. Asp-1061 contributes to the Mg(2+) binding site. The helical transmembrane segment at Ile-1124–Phe-1144 threads the bilayer. Topologically, residues Glu-1145–Tyr-1146 are extracellular. Residues Thr-1147–Leu-1167 traverse the membrane as a helical segment. Residues Asp-1168–Tyr-1200 are Cytoplasmic-facing. Residues Met-1201 to Leu-1221 traverse the membrane as a helical segment. Topologically, residues Thr-1222–Arg-1237 are extracellular. The chain crosses the membrane as a helical span at residues Leu-1238–Thr-1258. The Cytoplasmic segment spans residues Tyr-1259–Asp-1262. Residues Trp-1263–Tyr-1283 form a helical membrane-spanning segment. Residues Thr-1284–Glu-1302 are Extracellular-facing. A helical transmembrane segment spans residues Leu-1303–Val-1323. Arg-1320 provides a ligand contact to a 1,2-diacyl-sn-glycero-3-phospho-L-serine. At Lys-1324–Met-1555 the chain is on the cytoplasmic side. 2 disordered regions span residues Val-1364–Arg-1456 and Glu-1489–Met-1555. The segment covering Ala-1406–Gln-1432 has biased composition (polar residues). Basic and acidic residues-rich tracts occupy residues Pro-1436 to Arg-1456 and Lys-1540 to Met-1555.

The protein belongs to the cation transport ATPase (P-type) (TC 3.A.3) family. Type IV subfamily. In terms of assembly, component of a flippase complex consisting of DNF1 and CDC50. Interacts with CDC50; the interaction is direct. Mg(2+) serves as cofactor.

The protein resides in the cell membrane. Its subcellular location is the endosome membrane. The protein localises to the golgi apparatus. It is found in the trans-Golgi network membrane. It carries out the reaction ATP + H2O + phospholipidSide 1 = ADP + phosphate + phospholipidSide 2.. The enzyme catalyses a 1,2-diacyl-sn-glycero-3-phosphoethanolamine(out) + ATP + H2O = a 1,2-diacyl-sn-glycero-3-phosphoethanolamine(in) + ADP + phosphate + H(+). It catalyses the reaction a 1,2-diacyl-sn-glycero-3-phosphocholine(out) + ATP + H2O = a 1,2-diacyl-sn-glycero-3-phosphocholine(in) + ADP + phosphate + H(+). The catalysed reaction is a beta-D-glucosyl-(1&lt;-&gt;1')-N-acylsphing-4-enine(out) + ATP + H2O = a beta-D-glucosyl-(1&lt;-&gt;1')-N-acylsphing-4-enine(in) + ADP + phosphate + H(+). It carries out the reaction a 1,2-diacyl-sn-glycero-3-phospho-L-serine(out) + ATP + H2O = a 1,2-diacyl-sn-glycero-3-phospho-L-serine(in) + ADP + phosphate + H(+). Catalytic component of a P4-ATPase flippase complex which catalyzes the hydrolysis of ATP coupled to the transport of phosphatidylcholine and phosphatidylserine from the lumenal to the cytosolic leaflet of membranes and ensures the maintenance of asymmetric distribution of phospholipids. May also transport glucosylceramide and phosphatidylethanolamine. In Chaetomium thermophilum (strain DSM 1495 / CBS 144.50 / IMI 039719) (Thermochaetoides thermophila), this protein is Phospholipid-transporting ATPase DNF1.